Consider the following 130-residue polypeptide: Small ribosomal subunit protein uS9 (130 aa).

It belongs to the universal ribosomal protein uS9 family.

The chain is Small ribosomal subunit protein uS9 from Geobacillus thermodenitrificans (strain NG80-2).